The following is a 506-amino-acid chain: 2-isopropylmalate synthase (506 aa).

One can recognise a Pyruvate carboxyltransferase domain in the interval 6 to 267 (IIVFDTTLRD…YTDIVTKEIY (262 aa)). Mn(2+)-binding residues include D15, H201, H203, and N237. The regulatory domain stretch occupies residues 391–506 (SIQTLSTSSC…LNSYLSMKNR (116 aa)).

Belongs to the alpha-IPM synthase/homocitrate synthase family. LeuA type 1 subfamily. Homodimer. Mn(2+) is required as a cofactor.

It localises to the cytoplasm. The enzyme catalyses 3-methyl-2-oxobutanoate + acetyl-CoA + H2O = (2S)-2-isopropylmalate + CoA + H(+). It functions in the pathway amino-acid biosynthesis; L-leucine biosynthesis; L-leucine from 3-methyl-2-oxobutanoate: step 1/4. Its function is as follows. Catalyzes the condensation of the acetyl group of acetyl-CoA with 3-methyl-2-oxobutanoate (2-ketoisovalerate) to form 3-carboxy-3-hydroxy-4-methylpentanoate (2-isopropylmalate). In Campylobacter fetus subsp. fetus (strain 82-40), this protein is 2-isopropylmalate synthase.